Consider the following 679-residue polypeptide: Stress-70 protein, mitochondrial (679 aa).

The N-terminal 46 residues, 1–46, are a transit peptide targeting the mitochondrion; it reads MISASRAAAARLVGTTASRSPAAARHQDGWNGLSHEAFRFVSRRDY. Residues 1 to 432 are interaction with NFS1; it reads MISASRAAAA…IQGGVLAGDV (432 aa). ADP-binding residues include T63 and N64. Residues 63–431 form a nucleotide-binding domain (NBD) region; that stretch reads TNSCVAVMEG…AIQGGVLAGD (369 aa). An N6-acetyllysine modification is found at K76. T87 is modified (phosphothreonine). K135 and K138 each carry N6-acetyllysine; alternate. An N6-succinyllysine; alternate mark is found at K135 and K138. At K143 the chain carries N6-acetyllysine. At K206 the chain carries N6-acetyllysine; alternate. K206 bears the N6-succinyllysine; alternate mark. K206 carries the N6-malonyllysine; alternate modification. N6-acetyllysine is present on residues K234 and K288. K300 bears the N6-acetyllysine; alternate mark. N6-succinyllysine; alternate is present on K300. ADP contacts are provided by E313, K316, and S320. At K360 the chain carries N6-acetyllysine; alternate. K360 is subject to N6-succinyllysine; alternate. An N6-succinyllysine modification is found at K368. 2 residues coordinate ADP: G388 and R391. An N6-succinyllysine modification is found at K394. S408 is subject to Phosphoserine. Residues 432-441 form an interdomain linker region; that stretch reads VTDVLLLDVT. An interaction with FXN and ISCU region spans residues 432–679; the sequence is VTDVLLLDVT…QKEDQKEEKQ (248 aa). Positions 442 to 679 are substrate-binding domain (SBD); the sequence is PLSLGIETLG…QKEDQKEEKQ (238 aa). Omega-N-methylarginine is present on R513. N6-acetyllysine; alternate occurs at positions 567 and 600. An N6-succinyllysine; alternate mark is found at K567 and K600. At K610 the chain carries N6-succinyllysine. K612 carries the N6-acetyllysine modification. K646 carries the post-translational modification N6-acetyllysine; alternate. K646 is modified (N6-succinyllysine; alternate). The disordered stretch occupies residues 655–679; that stretch reads MASEREGSGSSSTGEQKEDQKEEKQ. Positions 669 to 679 are enriched in basic and acidic residues; that stretch reads EQKEDQKEEKQ.

Belongs to the heat shock protein 70 family. As to quaternary structure, interacts strongly with the intermediate form of FXN and weakly with its mature form. Interacts with HSCB. Associates with the mitochondrial contact site and cristae organizing system (MICOS) complex, composed of at least MICOS10/MIC10, CHCHD3/MIC19, CHCHD6/MIC25, APOOL/MIC27, IMMT/MIC60, APOO/MIC23/MIC26 and QIL1/MIC13. This complex was also known under the names MINOS or MitOS complex. The MICOS complex associates with mitochondrial outer membrane proteins SAMM50, MTX1, MTX2 and DNAJC11, mitochondrial inner membrane protein TMEM11 and with HSPA9. Interacts with DNLZ, the interaction is required to prevent self-aggregation. Interacts with TESPA1. Interacts with PDPN. Interacts with NFU1, NFS1 and ISCU. Interacts with TP53; the interaction promotes TP53 degradation. Interacts (via SBD domain) with UBXN2A; the interaction with UBXN2A inhibits HSPA9 interaction with and degradation of TP53, thereby promotes TP53 translocation to the nucleus. Interacts with ITPR1 AND VDAC1; this interaction couples ITPR1 to VDAC1. Component of the TIM23 mitochondrial inner membrane pre-sequence translocase complex.

It is found in the mitochondrion. The protein resides in the nucleus. Its subcellular location is the nucleolus. The protein localises to the cytoplasm. It localises to the mitochondrion matrix. It catalyses the reaction ATP + H2O = ADP + phosphate + H(+). The chaperone activity is regulated by ATP-induced allosteric coupling of the nucleotide-binding (NBD) and substrate-binding (SBD) domains. ATP binding in the nucleotide-binding pocket (NBP) leads to a conformational change in the NBD, which is transferred through the interdomain linker (IDL) to the substrate-binding domain (SBD). This elicits a reduced substrate affinity and a faster substrate exchange rate. Upon hydrolysis of ATP to ADP, the protein undergoes a conformational change that increases its affinity for substrate proteins. It cycles through repeated phases of ATP hydrolysis and nucleotide exchange, facilitating repeated cycles of substrate binding and release. Functions in collaboration with co-chaperones. Functions with the co-chaperone, DNLZ, to maintain solubility and regulate ATP hydrolysis. Nucleotide exchange factors, GRPEL1 and GRPEL2, accelerate nucleotide exchange. Functionally, mitochondrial chaperone that plays a key role in mitochondrial protein import, folding, and assembly. Plays an essential role in the protein quality control system, the correct folding of proteins, the re-folding of misfolded proteins, and the targeting of proteins for subsequent degradation. These processes are achieved through cycles of ATP binding, ATP hydrolysis, and ADP release, mediated by co-chaperones. In mitochondria, it associates with the TIM (translocase of the inner membrane) protein complex to assist in the import and folding of mitochondrial proteins. Plays an important role in mitochondrial iron-sulfur cluster (ISC) biogenesis, interacts with and stabilizes ISC cluster assembly proteins FXN, NFU1, NFS1 and ISCU. Regulates erythropoiesis via stabilization of ISC assembly. Regulates mitochondrial calcium-dependent apoptosis by coupling two calcium channels, ITPR1 and VDAC1, at the mitochondria-associated endoplasmic reticulum (ER) membrane to facilitate calcium transport from the ER lumen to the mitochondria intermembrane space, providing calcium for the downstream calcium channel MCU, which releases it into the mitochondrial matrix. Although primarily located in the mitochondria, it is also found in other cellular compartments. In the cytosol, it associates with proteins involved in signaling, apoptosis, or senescence. It may play a role in cell cycle regulation via its interaction with and promotion of degradation of TP53. May play a role in the control of cell proliferation and cellular aging. Protects against reactive oxygen species (ROS). Extracellular HSPA9 plays a cytoprotective role by preventing cell lysis following immune attack by the membrane attack complex by disrupting formation of the complex. In Rattus norvegicus (Rat), this protein is Stress-70 protein, mitochondrial.